The primary structure comprises 458 residues: BTB/POZ domain-containing protein At5g41330 (458 aa).

The 62-residue stretch at 11 to 72 (NVVSINVGGR…LRTGNLPARS (62 aa)) folds into the BTB domain. 3 WD repeats span residues 259-305 (DSAI…MVWE), 360-399 (LNER…LVGN), and 421-458 (SGEN…GISI).

It participates in protein modification; protein ubiquitination. May act as a substrate-specific adapter of an E3 ubiquitin-protein ligase complex (CUL3-RBX1-BTB) which mediates the ubiquitination and subsequent proteasomal degradation of target proteins. The protein is BTB/POZ domain-containing protein At5g41330 of Arabidopsis thaliana (Mouse-ear cress).